Here is a 77-residue protein sequence, read N- to C-terminus: Acyl carrier protein (77 aa).

Residues 1 to 76 form the Carrier domain; it reads MSLEDDVKAI…DVIKYIQERQ (76 aa). Serine 36 is modified (O-(pantetheine 4'-phosphoryl)serine).

It belongs to the acyl carrier protein (ACP) family. Post-translationally, 4'-phosphopantetheine is transferred from CoA to a specific serine of apo-ACP by AcpS. This modification is essential for activity because fatty acids are bound in thioester linkage to the sulfhydryl of the prosthetic group.

The protein localises to the cytoplasm. It functions in the pathway lipid metabolism; fatty acid biosynthesis. In terms of biological role, carrier of the growing fatty acid chain in fatty acid biosynthesis. This is Acyl carrier protein from Chlamydia trachomatis serovar A (strain ATCC VR-571B / DSM 19440 / HAR-13).